The sequence spans 134 residues: Profilin-1 (134 aa).

A disulfide bond links Cys-13 and Cys-118. An Involved in PIP2 interaction motif is present at residues 84 to 100; the sequence is AVVRGKKGSGGITIKKT. Position 114 is a phosphothreonine (Thr-114).

It belongs to the profilin family. Occurs in many kinds of cells as a complex with monomeric actin in a 1:1 ratio. Post-translationally, phosphorylated by MAP kinases.

Its subcellular location is the cytoplasm. The protein localises to the cytoskeleton. Its function is as follows. Binds to actin and affects the structure of the cytoskeleton. At high concentrations, profilin prevents the polymerization of actin, whereas it enhances it at low concentrations. In Olea europaea (Common olive), this protein is Profilin-1.